The chain runs to 356 residues: GDP-mannose:di-myo-inositol-1,3'-phosphate beta-1,2-mannosyltransferase (356 aa).

This sequence belongs to the MDIP synthase family. Mg(2+) serves as cofactor.

It carries out the reaction bis(myo-inositol) 1,3'-phosphate + GDP-alpha-D-mannose = 2-O-(beta-D-mannosyl)-bis(myo-inositol) 1,3'-phosphate + GDP + H(+). The catalysed reaction is 2-O-(beta-D-mannosyl)-bis(myo-inositol) 1,3'-phosphate + GDP-alpha-D-mannose = 2-O-(beta-D-mannosyl-(1-&gt;2)-beta-D-mannosyl)-bis(myo-inositol) 1,3'-phosphate + GDP + H(+). The enzyme catalyses bis(myo-inositol) 1,3'-phosphate + 2 GDP-alpha-D-mannose = 2-O-(beta-D-mannosyl-(1-&gt;2)-beta-D-mannosyl)-bis(myo-inositol) 1,3'-phosphate + 2 GDP + 2 H(+). In terms of biological role, catalyzes the transfer of the mannosyl group from GDP-mannose to di-myo-inositol-1,3'-phosphate (DIP), producing mannosyl-di-myo-inositol phosphate (MDIP). Can also use MDIP as an acceptor of a second mannose residue, yielding di-mannosyl-di-myo-inositol phosphate (MMDIP). Minor amounts of the tri-mannosylated form are also formed. The chain is GDP-mannose:di-myo-inositol-1,3'-phosphate beta-1,2-mannosyltransferase from Thermotoga maritima (strain ATCC 43589 / DSM 3109 / JCM 10099 / NBRC 100826 / MSB8).